The primary structure comprises 150 residues: Transcription antitermination protein NusB (150 aa).

The protein belongs to the NusB family.

Its function is as follows. Involved in transcription antitermination. Required for transcription of ribosomal RNA (rRNA) genes. Binds specifically to the boxA antiterminator sequence of the ribosomal RNA (rrn) operons. This is Transcription antitermination protein NusB from Alcanivorax borkumensis (strain ATCC 700651 / DSM 11573 / NCIMB 13689 / SK2).